Reading from the N-terminus, the 565-residue chain is CTP synthase (565 aa).

Residues 1 to 272 (MARPKNVKHI…DKRVLKKLGI (272 aa)) form an amidoligase domain region. A CTP-binding site is contributed by S18. S18 contributes to the UTP binding site. An ATP-binding site is contributed by 19–24 (SLGKGI). Residue Y59 coordinates L-glutamine. An ATP-binding site is contributed by D76. Residues D76 and E146 each coordinate Mg(2+). CTP is bound by residues 153 to 155 (DIE), 193 to 198 (KTKPTQ), and K229. UTP contacts are provided by residues 193 to 198 (KTKPTQ) and K229. Residues 299–543 (TIAVCGKYTE…VAAAKAFAFG (245 aa)) enclose the Glutamine amidotransferase type-1 domain. G363 serves as a coordination point for L-glutamine. The active-site Nucleophile; for glutamine hydrolysis is the C390. L-glutamine-binding positions include 391–394 (LGMQ), E414, and R471. Active-site residues include H516 and E518.

The protein belongs to the CTP synthase family. In terms of assembly, homotetramer.

The catalysed reaction is UTP + L-glutamine + ATP + H2O = CTP + L-glutamate + ADP + phosphate + 2 H(+). The enzyme catalyses L-glutamine + H2O = L-glutamate + NH4(+). It catalyses the reaction UTP + NH4(+) + ATP = CTP + ADP + phosphate + 2 H(+). It participates in pyrimidine metabolism; CTP biosynthesis via de novo pathway; CTP from UDP: step 2/2. With respect to regulation, allosterically activated by GTP, when glutamine is the substrate; GTP has no effect on the reaction when ammonia is the substrate. The allosteric effector GTP functions by stabilizing the protein conformation that binds the tetrahedral intermediate(s) formed during glutamine hydrolysis. Inhibited by the product CTP, via allosteric rather than competitive inhibition. Catalyzes the ATP-dependent amination of UTP to CTP with either L-glutamine or ammonia as the source of nitrogen. Regulates intracellular CTP levels through interactions with the four ribonucleotide triphosphates. The polypeptide is CTP synthase (Chlorobium phaeobacteroides (strain BS1)).